The primary structure comprises 308 residues: Folate transporter 1, chloroplastic (308 aa).

3 Solcar repeats span residues 4–94, 104–192, and 213–299; these read SWQW…AKQR, LSPA…LRKI, and ADYA…VLKL. 6 helical membrane passes run 10–30, 74–91, 110–130, 164–184, 216–236, and 274–293; these read ATAGAVAGFATVAAMHSLDVV, VIGSTVSWGLYFFFYGRA, LASAAEAGALVCLCTNPIWLV, ALYKGIVPGLVLVSHGAIQFT, AALGGSSKVAAVLLTYPFQVI, and GLTANLLKNVPASSITFIVY.

This sequence belongs to the mitochondrial carrier (TC 2.A.29) family. In terms of tissue distribution, ubiquitous.

It is found in the plastid. It localises to the chloroplast membrane. Its function is as follows. Mediates folate import into chloroplast. The sequence is that of Folate transporter 1, chloroplastic (FOLT1) from Arabidopsis thaliana (Mouse-ear cress).